Reading from the N-terminus, the 169-residue chain is Lutropin/choriogonadotropin subunit beta (169 aa).

Residues 1-20 (METLQGLLLWMLLSVGGVWA) form the signal peptide. 6 cysteine pairs are disulfide-bonded: Cys-29-Cys-77, Cys-43-Cys-92, Cys-46-Cys-130, Cys-54-Cys-108, Cys-58-Cys-110, and Cys-113-Cys-120. N-linked (GlcNAc...) asparagine glycosylation is present at Asn-33. The disordered stretch occupies residues 131-169 (APQASSSSKDPPSQPLTSTSTPTPGASRRSSHPLPIKTS). Ser-138 and Ser-143 each carry an O-linked (GalNAc...) serine glycan. Residues 145–158 (PLTSTSTPTPGASR) are compositionally biased toward low complexity. O-linked (GalNAc...) threonine glycosylation occurs at Thr-147. O-linked (GalNAc...) serine glycosylation occurs at Ser-148. O-linked (GalNAc...) threonine glycosylation occurs at Thr-149. Ser-150 carries an O-linked (GalNAc...) serine glycan. O-linked (GalNAc...) threonine glycans are attached at residues Thr-151 and Thr-153. O-linked (GalNAc...) serine glycosylation is found at Ser-157, Ser-160, Ser-161, and Ser-169.

This sequence belongs to the glycoprotein hormones subunit beta family. In terms of assembly, heterodimer of a common alpha chain and a unique beta chain which confers biological specificity to thyrotropin, lutropin, follitropin and gonadotropin. Post-translationally, microheterogeneity at Asn-33. O-glycosylation appears to be responsible for the beta subunit contribution to the difference in LH-receptor binding activity between LSH-B and CG-B.

It localises to the secreted. Functionally, promotes spermatogenesis and ovulation by stimulating the testes and ovaries to synthesize steroids. The sequence is that of Lutropin/choriogonadotropin subunit beta (LHB) from Equus caballus (Horse).